Reading from the N-terminus, the 94-residue chain is Neutrophil defensin 3 (94 aa).

Residues 1 to 19 form the signal peptide; sequence MRTLAILAAILLVALQAQA. The propeptide occupies 20-38; it reads EPLQARADEVAAAPEQIAA. 3 disulfides stabilise this stretch: Cys-66-Cys-94, Cys-68-Cys-83, and Cys-73-Cys-93.

This sequence belongs to the alpha-defensin family. Dimer. In terms of assembly, (Microbial infection) Interacts with herpes virus 1 HHV-1 envelope glycoprotein B; this interaction inhibits viral infection.

The protein resides in the secreted. Effector molecule of the innate immune system that acts via antibiotic-like properties against a broad array of infectious agents including bacteria, fungi, and viruses. Possesses the ability to neutralize bacterial toxins such as B.anthracis lethal factor, Clostridium difficile cytotoxin B as well as leukocidin produced by Staphylococcus aureus. Also blocks herpes simplex virus infection by interacting with envelope glycoprotein B and thus preventing its binding to heparan sulfate, the receptor for attachment. The protein is Neutrophil defensin 3 (DEFA3) of Homo sapiens (Human).